Here is a 421-residue protein sequence, read N- to C-terminus: Signal recognition particle receptor FtsY (421 aa).

The segment covering M1–K10 has biased composition (basic residues). The tract at residues M1–Q22 is disordered. GTP is bound by residues G228–T235, D309–R313, and T373–D376.

Belongs to the GTP-binding SRP family. FtsY subfamily. Part of the signal recognition particle protein translocation system, which is composed of SRP and FtsY. SRP is a ribonucleoprotein composed of Ffh and a 4.5S RNA molecule.

Its subcellular location is the cell membrane. It localises to the cytoplasm. The enzyme catalyses GTP + H2O = GDP + phosphate + H(+). In terms of biological role, involved in targeting and insertion of nascent membrane proteins into the cytoplasmic membrane. Acts as a receptor for the complex formed by the signal recognition particle (SRP) and the ribosome-nascent chain (RNC). Interaction with SRP-RNC leads to the transfer of the RNC complex to the Sec translocase for insertion into the membrane, the hydrolysis of GTP by both Ffh and FtsY, and the dissociation of the SRP-FtsY complex into the individual components. The protein is Signal recognition particle receptor FtsY of Neisseria meningitidis serogroup C.